A 429-amino-acid polypeptide reads, in one-letter code: Adenosylmethionine-8-amino-7-oxononanoate aminotransferase (429 aa).

Trp-52 provides a ligand contact to substrate. Gly-112 to Ser-113 is a binding site for pyridoxal 5'-phosphate. Residue Tyr-144 coordinates substrate. Asp-245 provides a ligand contact to pyridoxal 5'-phosphate. 2 residues coordinate substrate: Lys-274 and Gly-307. At Lys-274 the chain carries N6-(pyridoxal phosphate)lysine. Pyridoxal 5'-phosphate is bound at residue Pro-308–Thr-309. Residue Arg-391 coordinates substrate.

The protein belongs to the class-III pyridoxal-phosphate-dependent aminotransferase family. BioA subfamily. In terms of assembly, homodimer. Pyridoxal 5'-phosphate serves as cofactor.

It is found in the cytoplasm. The catalysed reaction is (8S)-8-amino-7-oxononanoate + S-adenosyl-L-methionine = S-adenosyl-4-methylsulfanyl-2-oxobutanoate + (7R,8S)-7,8-diammoniononanoate. Its pathway is cofactor biosynthesis; biotin biosynthesis; 7,8-diaminononanoate from 8-amino-7-oxononanoate (SAM route): step 1/1. In terms of biological role, catalyzes the transfer of the alpha-amino group from S-adenosyl-L-methionine (SAM) to 7-keto-8-aminopelargonic acid (KAPA) to form 7,8-diaminopelargonic acid (DAPA). It is the only aminotransferase known to utilize SAM as an amino donor. The sequence is that of Adenosylmethionine-8-amino-7-oxononanoate aminotransferase from Buchnera aphidicola subsp. Baizongia pistaciae (strain Bp).